Reading from the N-terminus, the 86-residue chain is Small ribosomal subunit protein bS16 (86 aa).

It belongs to the bacterial ribosomal protein bS16 family.

This Stenotrophomonas maltophilia (strain R551-3) protein is Small ribosomal subunit protein bS16.